The primary structure comprises 196 residues: GTP cyclohydrolase-2 (196 aa).

A GTP-binding site is contributed by 49-53; that stretch reads RVHSE. Residues Cys-54, Cys-65, and Cys-67 each coordinate Zn(2+). Residues Gln-70, 92–94, and Thr-114 contribute to the GTP site; that span reads EGR. Catalysis depends on Asp-126, which acts as the Proton acceptor. Catalysis depends on Arg-128, which acts as the Nucleophile. Thr-149 and Lys-154 together coordinate GTP.

Belongs to the GTP cyclohydrolase II family. Homodimer. Requires Zn(2+) as cofactor.

The catalysed reaction is GTP + 4 H2O = 2,5-diamino-6-hydroxy-4-(5-phosphoribosylamino)-pyrimidine + formate + 2 phosphate + 3 H(+). The protein operates within cofactor biosynthesis; riboflavin biosynthesis; 5-amino-6-(D-ribitylamino)uracil from GTP: step 1/4. In terms of biological role, catalyzes the conversion of GTP to 2,5-diamino-6-ribosylamino-4(3H)-pyrimidinone 5'-phosphate (DARP), formate and pyrophosphate. This Shigella dysenteriae serotype 1 (strain Sd197) protein is GTP cyclohydrolase-2.